The primary structure comprises 433 residues: MDIDGEDVSRRLHVKFVTKLDSPFKVPVNSVAIPSNVTRLGLSSIVNSIIESENPEWKTEPFDFLIDGELIRMSLEEFLLAKGISAERTLEIEYIRAVTPRKEEEPSLHDDWVSAVNGSSPRFILTGCYDGLGRVWSSAGSCSHILEGHSGAISSVALVNSNDAETVTVATASKDRTLRLFKFDPAESVDSTTKVRAYKILRGHKASVQSVSAQKSGNMVCSSSWDCTINLWNTNESTSEGESVSVKKRKGNNQAEESQSEGEAVTSLVGHTQCVSSVVWPEHDVIYSSSWDHSVRRWDVETGKDSLNLFCGKALNTVDVGGESSALIAAGGSDPILRVWDPRKPGTSAPVFQFSSHSSWISACKWHKSSWFHLLSASYDGKIMLWDLRTAWPLSVIDTHNDKVLSADWWKGESVVSGGADSNLRISSGIAIS.

Position 1 is an N-acetylmethionine (Met-1). A ubiquitin-like (UBL) domain region spans residues 12-96; the sequence is LHVKFVTKLD…ERTLEIEYIR (85 aa). WD repeat units follow at residues 108 to 146, 148 to 191, 203 to 242, 270 to 308, 310 to 350, 356 to 396, and 399 to 433; these read LHDD…SHIL, GHSG…SVDS, GHKA…SEGE, GHTQ…DSLN, FCGK…TSAP, SHSS…PLSV, and THND…IAIS. The tract at residues 238-263 is disordered; sequence TSEGESVSVKKRKGNNQAEESQSEGE.

The protein belongs to the WD repeat WDR12/YTM1 family. Interacts with PES. Interacts with BOP1.

The protein localises to the nucleus. It is found in the nucleolus. Its subcellular location is the nucleoplasm. In terms of biological role, required for maturation of ribosomal RNAs and formation of the large ribosomal subunit. The protein is Ribosome biogenesis protein WDR12 homolog of Arabidopsis thaliana (Mouse-ear cress).